We begin with the raw amino-acid sequence, 354 residues long: DNA polymerase IV (354 aa).

The region spanning 3–188 is the UmuC domain; it reads VIFVDFDYFF…LDIDEIPGIG (186 aa). Mg(2+) contacts are provided by Asp-7 and Asp-105. Glu-106 is a catalytic residue.

It belongs to the DNA polymerase type-Y family. Monomer. Mg(2+) is required as a cofactor.

It is found in the cytoplasm. The enzyme catalyses DNA(n) + a 2'-deoxyribonucleoside 5'-triphosphate = DNA(n+1) + diphosphate. Its function is as follows. Poorly processive, error-prone DNA polymerase involved in untargeted mutagenesis. Copies undamaged DNA at stalled replication forks, which arise in vivo from mismatched or misaligned primer ends. These misaligned primers can be extended by PolIV. Exhibits no 3'-5' exonuclease (proofreading) activity. May be involved in translesional synthesis. This is DNA polymerase IV from Sulfolobus acidocaldarius (strain ATCC 33909 / DSM 639 / JCM 8929 / NBRC 15157 / NCIMB 11770).